Here is a 584-residue protein sequence, read N- to C-terminus: MEAQYRNHDGDTSFSSLRVYLNSLSDTPSRFSRRAVSVSTSYDEMSRVRAVSGEQMRRTLRWYDLIGLGIGGMIGAGVFVTTGRASRLYAGPSIVVSYAIAGLCALLSAFCYTEFAVHLPVAGGAFSYIRITFGEFPAFITGANLIMDYVLSNAAVSRGFTAYLGSAFGISTSEWRFIVSGLPNGFNEIDPIAVIVVLAVTFVICYSTRESSKVNMVLTALHIAFIVFVIVMGFSKGDVKNLTRPDNPENPSGFFPFGVSGVFNGAAMVYLSYIGYDAVSTMAEEVKDPVKDIPMGISGSVAIVIVLYCLMAISMSMLLPYDLIDAEAPYSAAFSKSEGWEWVTRVVGIGASFGILTSLIVAMLGQARYMCVIGRSRVVPIWFAKVHPKTSTPVNASAFLGIFTAVLALFTDLNVLLNLVSIGTLFVFYMVANAVIFRRYVTVGYTEPWPTLSFLCLFSITSILFTLVWQLAPSGPPKWFILGASTVTAIAIVQIFHCVVPQARIPEFWGVPLMPWTPCVSIFLNIFLLGSLDAPSYIRFGFFSGLVVLVYVFYSVHASYDAEGDGSLDFKDVESLERINRVLS.

The N-terminal 49 residues, 1-49 (MEAQYRNHDGDTSFSSLRVYLNSLSDTPSRFSRRAVSVSTSYDEMSRVR), are a transit peptide targeting the chloroplast. A run of 14 helical transmembrane segments spans residues 62–82 (WYDL…FVTT), 90–110 (AGPS…LSAF), 131–151 (ITFG…DYVL), 185–205 (GFNE…FVIC), 214–234 (VNMV…VMGF), 254–274 (FFPF…LSYI), 293–313 (IPMG…LMAI), 346–366 (VVGI…MLGQ), 396–416 (ASAF…LNVL), 417–437 (LNLV…AVIF), 449–469 (WPTL…TLVW), 480–500 (FILG…HCVV), 508–528 (FWGV…NIFL), and 540–560 (FGFF…HASY).

It belongs to the amino acid-polyamine-organocation (APC) superfamily. Cationic amino acid transporter (CAT) (TC 2.A.3.3) family.

The protein localises to the plastid. Its subcellular location is the chloroplast membrane. In terms of biological role, permease involved in the transport of the cationic amino acids. This chain is Cationic amino acid transporter 7, chloroplastic (CAT7), found in Arabidopsis thaliana (Mouse-ear cress).